We begin with the raw amino-acid sequence, 76 residues long: Transcription modulator YdgT (76 aa).

It belongs to the Hha/YmoA/Cnu family.

Its function is as follows. Binds to H-NS and modifies the range of genes it silences; H-NS alone silences 'core' genes while the H-NS-Hha complex (and presumably also H-NS-YdgT) silences genes acquired by horizontal gene transfer. Plays a role silencing virulence factors in the absence of factors that induce pathogenicity. The polypeptide is Transcription modulator YdgT (ydgT) (Salmonella typhimurium (strain SL1344)).